A 317-amino-acid polypeptide reads, in one-letter code: Proline iminopeptidase (317 aa).

The AB hydrolase-1 domain occupies V41 to H296. The active-site Nucleophile is the S113. The active site involves D268. The active-site Proton donor is the H296.

This sequence belongs to the peptidase S33 family. As to quaternary structure, monomer.

It localises to the cytoplasm. The catalysed reaction is Release of N-terminal proline from a peptide.. Specifically catalyzes the removal of N-terminal proline residues from peptides. The protein is Proline iminopeptidase (pip) of Serratia marcescens.